Reading from the N-terminus, the 428-residue chain is Serine--tRNA ligase (428 aa).

231 to 233 (TAE) contacts L-serine. 262–264 (RAE) serves as a coordination point for ATP. Glu-285 contributes to the L-serine binding site. 349-352 (EISS) is an ATP binding site. An L-serine-binding site is contributed by Ser-385.

The protein belongs to the class-II aminoacyl-tRNA synthetase family. Type-1 seryl-tRNA synthetase subfamily. As to quaternary structure, homodimer. The tRNA molecule binds across the dimer.

It localises to the cytoplasm. The enzyme catalyses tRNA(Ser) + L-serine + ATP = L-seryl-tRNA(Ser) + AMP + diphosphate + H(+). It carries out the reaction tRNA(Sec) + L-serine + ATP = L-seryl-tRNA(Sec) + AMP + diphosphate + H(+). Its pathway is aminoacyl-tRNA biosynthesis; selenocysteinyl-tRNA(Sec) biosynthesis; L-seryl-tRNA(Sec) from L-serine and tRNA(Sec): step 1/1. Catalyzes the attachment of serine to tRNA(Ser). Is also able to aminoacylate tRNA(Sec) with serine, to form the misacylated tRNA L-seryl-tRNA(Sec), which will be further converted into selenocysteinyl-tRNA(Sec). The protein is Serine--tRNA ligase of Methylorubrum populi (strain ATCC BAA-705 / NCIMB 13946 / BJ001) (Methylobacterium populi).